The chain runs to 341 residues: Thymidine kinase (341 aa).

19-26 (GAYGIGKT) is an ATP binding site. E48 (proton acceptor) is an active-site residue. Substrate is bound by residues Y66 and Q90. Residue R183 coordinates ATP. Position 189 (R189) interacts with substrate.

The protein belongs to the herpesviridae thymidine kinase family. In terms of assembly, homodimer.

It carries out the reaction thymidine + ATP = dTMP + ADP + H(+). Catalyzes the transfer of the gamma-phospho group of ATP to thymidine to generate dTMP in the salvage pathway of pyrimidine synthesis. The dTMP serves as a substrate for DNA polymerase during viral DNA replication. Allows the virus to be reactivated and to grow in non-proliferative cells lacking a high concentration of phosphorylated nucleic acid precursors. This chain is Thymidine kinase, found in Varicella-zoster virus (strain Oka vaccine) (HHV-3).